The following is a 493-amino-acid chain: Transcript termination protein OPG145 (493 aa).

Residues 100–256 (MIESKRPLYI…NSIINIAKLS (157 aa)) enclose the Helicase ATP-binding domain. 113-120 (LACGFGKT) is a binding site for ATP. Positions 206-209 (DESH) match the DESH box motif. A Helicase C-terminal domain is found at 309 to 456 (ILDTLVEEFK…IISLSVDKLG (148 aa)).

It belongs to the helicase family. Poxviruses subfamily. In terms of assembly, interacts with OPG087. Might be part of a transcription complex composed at least of OPG087, OPG110, and OPG145.

Its subcellular location is the virion. DNA helicase which seems to act as a postreplicative transcription termination factor. Involved in ATP-dependent release of nascent RNA. Forms a stable complex with single-stranded DNA, and to a lesser extent RNA. The sequence is that of Transcript termination protein OPG145 (OPG145) from Homo sapiens (Human).